The sequence spans 475 residues: CAAX prenyl protease 1 homolog (475 aa).

Over 1 to 18 the chain is Lumenal; that stretch reads MGMWASVDAMWDFPAEKR. The helical transmembrane segment at 19–39 threads the bilayer; it reads IFGAVLLFSWTVYLWETFLAQ. Residues 40-81 are Nuclear-facing; it reads RQRRIYKTTTRVPAELEQIMDSDTFEKSRLYQLDKSTFSFWS. A helical membrane pass occupies residues 82–102; sequence GLYSEVEGTFILLFGGIPYLW. The Lumenal portion of the chain corresponds to 103–123; it reads RLSGQFCSSAGFGPEYEIIQS. Residues 124–144 form a helical membrane-spanning segment; it reads LVFLLLATLFSALTGLPWSLY. Over 145-170 the chain is Nuclear; the sequence is NTFVIEEKHGFNHQTLEFFMKDAIKK. The chain crosses the membrane as a helical span at residues 171–191; that stretch reads FIVTQCILLPVSALLLYIIKI. Residues 192-195 are Lumenal-facing; sequence GGDY. A helical membrane pass occupies residues 196 to 216; sequence FFIYAWLFTLVVSLVLVTIYA. Topologically, residues 217–347 are nuclear; that stretch reads DYIAPLFDKF…GHWKLGHTVK (131 aa). The tract at residues 293–314 is disordered; that stretch reads DNQEESGMEARNEGEGDSEEVK. Residues 300 to 314 are compositionally biased toward basic and acidic residues; it reads MEARNEGEGDSEEVK. Histidine 335 lines the Zn(2+) pocket. Glutamate 336 is an active-site residue. Histidine 339 contacts Zn(2+). A helical membrane pass occupies residues 348–368; that stretch reads NIIISQMNSFLCFFLFAVLIG. Over 369-382 the chain is Lumenal; it reads RRELFAAFGFYDSQ. A helical transmembrane segment spans residues 383–405; the sequence is PTLIGLLIIFQFIFSPYNEVLSF. The Nuclear portion of the chain corresponds to 406-475; the sequence is CLTVLSRRFE…LQALKNAKQD (70 aa). Residue glutamate 415 participates in Zn(2+) binding.

The protein belongs to the peptidase M48A family. Zn(2+) is required as a cofactor.

The protein resides in the endoplasmic reticulum membrane. It localises to the nucleus inner membrane. Its subcellular location is the early endosome membrane. It is found in the late endosome membrane. It catalyses the reaction Hydrolyzes the peptide bond -P2-(S-farnesyl or geranylgeranyl)C-P1'-P2'-P3'-COOH where P1' and P2' are amino acids with aliphatic side chains and P3' is any C-terminal residue.. Inhibited by HIV protease inhibitors, such as lopinavir, tipranavir and nelfinavir, leading to defects in lamin A/LMNA maturation and accumulation of prelamin-A/C precursors in cells. This causes defects in nuclear envelope integrity and release of DNA in the cytosol, activating the AIM2 inflammasome. Functionally, transmembrane metalloprotease whose catalytic activity is critical for processing lamin A/LMNA on the inner nuclear membrane and clearing clogged translocons on the endoplasmic reticulum. Proteolytically removes the C-terminal three residues of farnesylated proteins. Also plays an antiviral role independently of its protease activity by restricting enveloped RNA and DNA viruses. Mechanistically, controls IFITM antiviral pathway to hinder viruses from breaching the endosomal barrier by modulating membrane fluidity. The sequence is that of CAAX prenyl protease 1 homolog from Mus musculus (Mouse).